Here is a 607-residue protein sequence, read N- to C-terminus: DNA mismatch repair protein MutL (607 aa).

This sequence belongs to the DNA mismatch repair MutL/HexB family.

This protein is involved in the repair of mismatches in DNA. It is required for dam-dependent methyl-directed DNA mismatch repair. May act as a 'molecular matchmaker', a protein that promotes the formation of a stable complex between two or more DNA-binding proteins in an ATP-dependent manner without itself being part of a final effector complex. The polypeptide is DNA mismatch repair protein MutL (Gemmatimonas aurantiaca (strain DSM 14586 / JCM 11422 / NBRC 100505 / T-27)).